Here is a 204-residue protein sequence, read N- to C-terminus: STPVDPKTKANALIDSLPGNSFLSKTGILATTAAASVYAISSELYVVNDESILLVTFLGFIALISKTVAPLYGEMAKNRTDHVVGLLNQARADHVNAVKTRIDQVSNLKDVVSTTKALFEMSKETAALEAEAFELKQKVAVASEAKSVLDSWVRYEAQVRQHEQEQLASTVISKVQSELQNAKFQDKVLAQAVEEVERLFAKEK.

The next 2 helical transmembrane spans lie at 27–47 (GILA…LYVV) and 52–72 (ILLV…APLY).

As to quaternary structure, F-type ATP synthases have 2 components, the catalytic core F(1) and the membrane-embedded component F(0), linked together by a central stalk and a peripheral stalk. The central stalk, also called rotor shaft, is often seen as part of F(1). The peripheral stalk is seen as part of F(0). F(0) contains the membrane channel next to the rotor. F-type ATP synthases form dimers but each monomer functions independently in ATP generation. The dimer consists of 18 different polypeptides: ATP1 (subunit alpha, part of F(1), 3 molecules per monomer), ATP2 (subunit beta, part of F(1), 3 molecules per monomer), ATP3 (subunit gamma, part of the central stalk), ATP4 (subunit b, part of the peripheral stalk), ATP5/OSCP (subunit 5/OSCP, part of the peripheral stalk), ATP6 (subunit a, part of the peripheral stalk), ATP7 (subunit d, part of the peripheral stalk), ATP8 (subunit 8, part of the peripheral stalk), OLI1 (subunit c, part of the rotor, 10 molecules per monomer), ATP14 (subunit h, part of the peripheral stalk), ATP15 (subunit epsilon, part of the central stalk), ATP16 (subunit delta, part of the central stalk), ATP17 (subunit f, part of the peripheral stalk), ATP18 (subunit i/j, part of the peripheral stalk). Dimer-specific subunits are ATP19 (subunit k, at interface between monomers), ATP20 (subunit g, at interface between monomers), TIM11 (subunit e, at interface between monomers). Also contains subunit L.

The protein localises to the mitochondrion inner membrane. Functionally, mitochondrial membrane ATP synthase (F(1)F(0) ATP synthase or Complex V) produces ATP from ADP in the presence of a proton gradient across the membrane which is generated by electron transport complexes of the respiratory chain. F-type ATP synthases consist of two structural domains, F(1) - containing the extramembraneous catalytic core, and F(0) - containing the membrane proton channel, linked together by a central stalk and a peripheral stalk. During catalysis, ATP synthesis in the catalytic domain of F(1) is coupled via a rotary mechanism of the central stalk subunits to proton translocation. Part of the complex F(0) domain and the peripheral stalk, which acts as a stator to hold the catalytic alpha/ATP1(3)beta/ATP2(3) subcomplex and subunit a/ATP6 static relative to the rotary elements. In Pichia angusta (Yeast), this protein is ATP synthase subunit 4, mitochondrial.